Reading from the N-terminus, the 123-residue chain is ATP synthase epsilon chain (123 aa).

Belongs to the ATPase epsilon chain family. F-type ATPases have 2 components, CF(1) - the catalytic core - and CF(0) - the membrane proton channel. CF(1) has five subunits: alpha(3), beta(3), gamma(1), delta(1), epsilon(1). CF(0) has three main subunits: a, b and c.

Its subcellular location is the cell inner membrane. Functionally, produces ATP from ADP in the presence of a proton gradient across the membrane. In Helicobacter pylori (strain P12), this protein is ATP synthase epsilon chain.